The chain runs to 228 residues: Geranylgeranylglyceryl phosphate synthase (228 aa).

Lys-13 contributes to the sn-glycerol 1-phosphate binding site. Asp-15 and Thr-41 together coordinate Mg(2+). Sn-glycerol 1-phosphate-binding positions include 159–164 (YIEYSG), Gly-189, and 209–210 (GN).

This sequence belongs to the GGGP/HepGP synthase family. Group I subfamily. It depends on Mg(2+) as a cofactor.

It localises to the cytoplasm. The enzyme catalyses sn-glycerol 1-phosphate + (2E,6E,10E)-geranylgeranyl diphosphate = sn-3-O-(geranylgeranyl)glycerol 1-phosphate + diphosphate. The protein operates within membrane lipid metabolism; glycerophospholipid metabolism. Its function is as follows. Prenyltransferase that catalyzes the transfer of the geranylgeranyl moiety of geranylgeranyl diphosphate (GGPP) to the C3 hydroxyl of sn-glycerol-1-phosphate (G1P). This reaction is the first ether-bond-formation step in the biosynthesis of archaeal membrane lipids. The polypeptide is Geranylgeranylglyceryl phosphate synthase (Methanospirillum hungatei JF-1 (strain ATCC 27890 / DSM 864 / NBRC 100397 / JF-1)).